The following is a 352-amino-acid chain: Ribosomal RNA large subunit methyltransferase M (352 aa).

S-adenosyl-L-methionine is bound by residues Ser184, 217–220 (APGG), Asp236, Asp256, and Asp272. The active-site Proton acceptor is the Lys301.

The protein belongs to the class I-like SAM-binding methyltransferase superfamily. RNA methyltransferase RlmE family. RlmM subfamily. As to quaternary structure, monomer.

It localises to the cytoplasm. The enzyme catalyses cytidine(2498) in 23S rRNA + S-adenosyl-L-methionine = 2'-O-methylcytidine(2498) in 23S rRNA + S-adenosyl-L-homocysteine + H(+). Its function is as follows. Catalyzes the 2'-O-methylation at nucleotide C2498 in 23S rRNA. The chain is Ribosomal RNA large subunit methyltransferase M from Pseudomonas aeruginosa (strain LESB58).